Here is a 194-residue protein sequence, read N- to C-terminus: Protein GrpE (194 aa).

Polar residues predominate over residues 1 to 12 (MSSKEQNTPNEQ). A disordered region spans residues 1–39 (MSSKEQNTPNEQASDEIETEQAKNQGADTAAEAADQRDE).

Belongs to the GrpE family. As to quaternary structure, homodimer.

The protein localises to the cytoplasm. Functionally, participates actively in the response to hyperosmotic and heat shock by preventing the aggregation of stress-denatured proteins, in association with DnaK and GrpE. It is the nucleotide exchange factor for DnaK and may function as a thermosensor. Unfolded proteins bind initially to DnaJ; upon interaction with the DnaJ-bound protein, DnaK hydrolyzes its bound ATP, resulting in the formation of a stable complex. GrpE releases ADP from DnaK; ATP binding to DnaK triggers the release of the substrate protein, thus completing the reaction cycle. Several rounds of ATP-dependent interactions between DnaJ, DnaK and GrpE are required for fully efficient folding. The protein is Protein GrpE of Erwinia tasmaniensis (strain DSM 17950 / CFBP 7177 / CIP 109463 / NCPPB 4357 / Et1/99).